The primary structure comprises 189 residues: Hypoxanthine/guanine phosphoribosyltransferase (189 aa).

The protein belongs to the purine/pyrimidine phosphoribosyltransferase family. Archaeal HPRT subfamily. Homodimer.

The protein localises to the cytoplasm. It carries out the reaction IMP + diphosphate = hypoxanthine + 5-phospho-alpha-D-ribose 1-diphosphate. The catalysed reaction is GMP + diphosphate = guanine + 5-phospho-alpha-D-ribose 1-diphosphate. It participates in purine metabolism; IMP biosynthesis via salvage pathway; IMP from hypoxanthine: step 1/1. Functionally, catalyzes a salvage reaction resulting in the formation of IMP that is energically less costly than de novo synthesis. The sequence is that of Hypoxanthine/guanine phosphoribosyltransferase from Methanothermus fervidus (strain ATCC 43054 / DSM 2088 / JCM 10308 / V24 S).